A 190-amino-acid chain; its full sequence is Large ribosomal subunit protein bL9 (190 aa).

The protein belongs to the bacterial ribosomal protein bL9 family.

Its function is as follows. Binds to the 23S rRNA. The polypeptide is Large ribosomal subunit protein bL9 (Methylorubrum extorquens (strain CM4 / NCIMB 13688) (Methylobacterium extorquens)).